Here is a 561-residue protein sequence, read N- to C-terminus: Urocanate hydratase (561 aa).

NAD(+) is bound by residues 52-53, Q130, 176-178, E196, R201, 242-243, 263-267, 273-274, and Y322; these read GG, GMG, NA, QTSAH, and YL. The active site involves C410. G492 contacts NAD(+).

Belongs to the urocanase family. The cofactor is NAD(+).

The protein localises to the cytoplasm. It catalyses the reaction 4-imidazolone-5-propanoate = trans-urocanate + H2O. Its pathway is amino-acid degradation; L-histidine degradation into L-glutamate; N-formimidoyl-L-glutamate from L-histidine: step 2/3. Its function is as follows. Catalyzes the conversion of urocanate to 4-imidazolone-5-propionate. This Citrobacter koseri (strain ATCC BAA-895 / CDC 4225-83 / SGSC4696) protein is Urocanate hydratase.